The sequence spans 126 residues: CD59 glycoprotein (126 aa).

The signal sequence occupies residues 1 to 22; the sequence is MRARRGFILLLLLAVLCSTGVS. The 88-residue stretch at 23-110 folds into the UPAR/Ly6 domain; it reads LRCYNCLDPV…NGAISLLGKT (88 aa). Intrachain disulfides connect cysteine 25-cysteine 48, cysteine 28-cysteine 35, cysteine 41-cysteine 61, cysteine 67-cysteine 85, and cysteine 86-cysteine 91. Residue asparagine 38 is glycosylated (N-linked (GlcNAc...) asparagine). A lipid anchor (GPI-anchor amidated asparagine) is attached at asparagine 101. Residues 102-126 constitute a propeptide, removed in mature form; the sequence is GAISLLGKTALLVTSVLAAILKPCF.

In terms of assembly, interacts with T-cell surface antigen CD2. Post-translationally, N- and O-glycosylated.

It is found in the cell membrane. The protein localises to the secreted. Functionally, potent inhibitor of the complement membrane attack complex (MAC) action, which protects self-cells from damage during complement activation. Acts by binding to the beta-haipins of C8 (C8A and C8B) components of the assembling MAC, forming an intermolecular beta-sheet that prevents incorporation of the multiple copies of C9 required for complete formation of the osmolytic pore. This is CD59 glycoprotein from Rattus norvegicus (Rat).